A 441-amino-acid chain; its full sequence is Xaa-Pro dipeptidase (441 aa).

Mn(2+) contacts are provided by Asp-244, Asp-255, His-336, Glu-381, and Glu-420.

It belongs to the peptidase M24B family. Bacterial-type prolidase subfamily. Mn(2+) is required as a cofactor.

It catalyses the reaction Xaa-L-Pro dipeptide + H2O = an L-alpha-amino acid + L-proline. Its function is as follows. Splits dipeptides with a prolyl residue in the C-terminal position. This chain is Xaa-Pro dipeptidase, found in Xanthomonas campestris pv. campestris (strain B100).